The chain runs to 442 residues: 23S rRNA (uracil(1939)-C(5))-methyltransferase RlmD (442 aa).

Residues 12 to 70 (SKQLSAKVTLEVTKLDHLGAGMAQHQGKIVFIPGALPNEKVTVQLTEQKKRHARAKLLK) enclose the TRAM domain. Residues Cys83, Cys89, Cys92, and Cys171 each coordinate [4Fe-4S] cluster. Residues Gln276, Phe305, Asn310, Glu326, Asp353, and Asp373 each coordinate S-adenosyl-L-methionine. Residue Cys399 is the Nucleophile of the active site.

This sequence belongs to the class I-like SAM-binding methyltransferase superfamily. RNA M5U methyltransferase family. RlmD subfamily.

It catalyses the reaction uridine(1939) in 23S rRNA + S-adenosyl-L-methionine = 5-methyluridine(1939) in 23S rRNA + S-adenosyl-L-homocysteine + H(+). In terms of biological role, catalyzes the formation of 5-methyl-uridine at position 1939 (m5U1939) in 23S rRNA. This Shewanella sediminis (strain HAW-EB3) protein is 23S rRNA (uracil(1939)-C(5))-methyltransferase RlmD.